The chain runs to 410 residues: MSEIKLGDQWFIIVSDPQKQRGDKSSSGSYVTYQISSKPATEGDKRSGEDDITVVHRRYSDFVLLYQILANDYPACIVPPLPDKKVLNYLDRFSQSFTQKRCHSLQNFLQRLAQHPVLSQSKILHTFLVSSDWDAYQKSLAETVGNLSNKEELTETIMNAFKSVHSQSDEFVEIKEKSGKLDHNVSKIDKLFHRVVKKQEAIAEDYGKLGLSLRELQELVTTGDDRNSEVGNLGTKIKTFNEGMAQLSYSLRDLSRYIDYEYIIDLRDMEDYIDSMKQLIKLKDQKQIDYEELSDYLTRSINEKNNLISGYGSGSNFFKSKLEEFTGINQEAARREKISKLESKVQALTTEVENAKKVADAFEKEALKEVEIFEQIKTRELKRSLTTLADHHIEFYQKMVNTWSKIEESL.

The 125-residue stretch at 11–135 (FIIVSDPQKQ…TFLVSSDWDA (125 aa)) folds into the PX domain. Residues arginine 58, serine 60, lysine 84, and arginine 101 each contribute to the a 1,2-diacyl-sn-glycero-3-phospho-(1D-myo-inositol-3-phosphate) site. Residues 329-368 (NQEAARREKISKLESKVQALTTEVENAKKVADAFEKEALK) adopt a coiled-coil conformation.

Belongs to the sorting nexin family.

The protein localises to the cytoplasm. Its subcellular location is the cytosol. It is found in the preautophagosomal structure membrane. It localises to the endosome membrane. In terms of biological role, sorting nexin, involved in the separation or division of vacuoles throughout the entire life cycle of the cells. Involved in retrieval of late-Golgi SNAREs from post-Golgi endosomes to the trans-Golgi network, for cytoplasm to vacuole transport (Cvt), and autophagy of large cargos including mitophagy, pexophagy and glycophagy. The sequence is that of Sorting nexin-4 (SNX4) from Eremothecium gossypii (strain ATCC 10895 / CBS 109.51 / FGSC 9923 / NRRL Y-1056) (Yeast).